The chain runs to 615 residues: MKPIIFLVLSLLLILEKQAAVMGQKGGSKGRLPSESSQFPHGQKGQQYCARKDKQHAESKRSVSIEHTYHVDIPDHDQTRTSKQYDLNAQNKRIKSEKHAAGSQEPFNHKQEGREHGKSKGDFHVLIIHHKRGHAPHGTQNPSQDQGNSTSGKGISSQDSNTKERLLALGLGKEQDSVSGTQRNGTQGGSQSSPVLQTEDPVHNKKPETQNSLQNKGSSPNVNETKQKHSSKVQSPLCSAQEDRLQHGSKDVFSKNQNQTRNPNQDQEHGQKAHNRSCQCSSTEERRPNHGEKGIQKDASKGSTSNQTEDKMHDKSQKQVTTPSQEDGHRANKTSSQSSGTEERRPNHGEKGIQKDASKGSTSNQTEDKMHDKSQKQVTTPSQEDGHRANKTSSQSSGTEERRPNHGEKGIQKDASKGSTSNQTEDKMHDKSQKQVTTPSQEDGHRANKTSSQSSGTEERRPNHGEKGIQKDASKGSTSNKTEDKMHDKSQKQVTTPSQEDGHRANKTSSQSSGTEERRPNHGEKGIQKDASKGSSSNKTEDEKHDKSQKQVTTPSQDQQSGQDADEEEDLLSHYQKDRHQHRSYGGLDIVIVEHEADDDDRLTHHDNNQNSIFT.

The N-terminal stretch at 1 to 23 is a signal peptide; sequence MKPIIFLVLSLLLILEKQAAVMG. Gln-24 carries the pyrrolidone carboxylic acid modification. 3 disordered regions span residues 24–118, 133–160, and 172–585; these read QKGG…EHGK, GHAP…SQDS, and GKEQ…HRSY. Positions 34–46 are enriched in polar residues; sequence SESSQFPHGQKGQ. Basic and acidic residues predominate over residues 50–80; it reads ARKDKQHAESKRSVSIEHTYHVDIPDHDQTR. Over residues 81-91 the composition is skewed to polar residues; sequence TSKQYDLNAQN. The span at 107–118 shows a compositional bias: basic and acidic residues; that stretch reads FNHKQEGREHGK. Composition is skewed to polar residues over residues 138–160, 177–196, and 209–224; these read GTQN…SQDS, SVSG…SPVL, and TQNS…NVNE. N-linked (GlcNAc...) asparagine glycosylation is found at Asn-148, Asn-184, and Asn-223. The span at 241 to 253 shows a compositional bias: basic and acidic residues; sequence QEDRLQHGSKDVF. The span at 254–265 shows a compositional bias: polar residues; sequence SKNQNQTRNPNQ. Residues Asn-258 and Asn-275 are each glycosylated (N-linked (GlcNAc...) asparagine). Positions 283 to 300 are enriched in basic and acidic residues; it reads TEERRPNHGEKGIQKDAS. The N-linked (GlcNAc...) asparagine glycan is linked to Asn-306. Over residues 308–317 the composition is skewed to basic and acidic residues; the sequence is TEDKMHDKSQ. A glycan (N-linked (GlcNAc...) asparagine) is linked at Asn-332. The segment covering 341-358 has biased composition (basic and acidic residues); sequence TEERRPNHGEKGIQKDAS. A glycan (N-linked (GlcNAc...) asparagine) is linked at Asn-364. A compositionally biased stretch (basic and acidic residues) spans 366–375; sequence TEDKMHDKSQ. Asn-390 carries an N-linked (GlcNAc...) asparagine glycan. A compositionally biased stretch (basic and acidic residues) spans 399 to 416; that stretch reads TEERRPNHGEKGIQKDAS. Asn-422 carries an N-linked (GlcNAc...) asparagine glycan. The segment covering 424–433 has biased composition (basic and acidic residues); it reads TEDKMHDKSQ. An N-linked (GlcNAc...) asparagine glycan is attached at Asn-448. Residues 457–474 are compositionally biased toward basic and acidic residues; that stretch reads TEERRPNHGEKGIQKDAS. Residue Asn-480 is glycosylated (N-linked (GlcNAc...) asparagine). Basic and acidic residues predominate over residues 481 to 491; that stretch reads KTEDKMHDKSQ. Asn-506 carries N-linked (GlcNAc...) asparagine glycosylation. Basic and acidic residues predominate over residues 515–532; the sequence is TEERRPNHGEKGIQKDAS. N-linked (GlcNAc...) asparagine glycosylation occurs at Asn-538. Basic and acidic residues predominate over residues 539–549; the sequence is KTEDEKHDKSQ. Over residues 550–563 the composition is skewed to polar residues; the sequence is KQVTTPSQDQQSGQ.

The protein belongs to the semenogelin family. Occurs in disulfide-linked complexes. Transglutaminase substrate. Post-translationally, rapidly cleaved after ejaculation by KLK3/PSA, resulting in liquefaction of the semen coagulum and the progressive release of motile spermatozoa.

The protein resides in the secreted. Its function is as follows. Predominant protein in semen. It participates in the formation of a gel matrix entrapping the accessory gland secretions and ejaculated spermatozoa. Fragments of semenogelin and/or fragments of the related proteins may contribute to the activation of progressive sperm movements as the gel-forming proteins are fragmented by KLK3/PSA. The protein is Semenogelin-1 (SEMG1) of Saguinus oedipus (Cotton-top tamarin).